Here is a 308-residue protein sequence, read N- to C-terminus: Elongation factor Ts (308 aa).

The segment at 80 to 83 is involved in Mg(2+) ion dislocation from EF-Tu; the sequence is TDFV.

This sequence belongs to the EF-Ts family.

It localises to the cytoplasm. Functionally, associates with the EF-Tu.GDP complex and induces the exchange of GDP to GTP. It remains bound to the aminoacyl-tRNA.EF-Tu.GTP complex up to the GTP hydrolysis stage on the ribosome. In Sphingopyxis alaskensis (strain DSM 13593 / LMG 18877 / RB2256) (Sphingomonas alaskensis), this protein is Elongation factor Ts.